The sequence spans 208 residues: Large ribosomal subunit protein uL3 (208 aa).

The interval 116–148 (GFQGVIKRHGQSRGPMAHGSRYHRRPGSMGPVA) is disordered.

Belongs to the universal ribosomal protein uL3 family. In terms of assembly, part of the 50S ribosomal subunit. Forms a cluster with proteins L14 and L19.

Functionally, one of the primary rRNA binding proteins, it binds directly near the 3'-end of the 23S rRNA, where it nucleates assembly of the 50S subunit. The chain is Large ribosomal subunit protein uL3 from Streptococcus pneumoniae (strain Hungary19A-6).